The chain runs to 492 residues: MTKYETVIGLEVHVQLDTKSKMFCRCSTDYASAEPNTHVCPVCLGMPGVLPTINKQAVEYTIMSGLALGCDIAPFTKFDRKNYAYPDLMKGYQISQYDQPLCGKGFLDINVDGVIRRIGITRIHLEEDVAKLHHESDINGQPYSLLDINRSSIPLMEVVSEPDMRTPEEARQYLMKLRTIMRYLGVSTANMEEGSFRCDANISIRPVGATELGAKVEVKNMNSFKAVFSALEYEEVRQRKMADEGKKISQETRGWQDEKCQTVSQRSKEFAHDYRYFPEPDLPPLHISCDWIEDIRAKLPELPETRKERFINGYWLSEYDASLLTASRELADYFEAVLGETDFQNIPQDKGVKEVANWVVGSVNSIMNTGGADITAFALKVSPASLCHLLVLVSAGKVNAATAKAVLEDMYATGQNAEAIIEKKGLSQISDSSELVAIAKKVLADNPKAVAEYNEGKTQVIGFLVGQMMKQSKGRANPNIAMELLKKALEEG.

This sequence belongs to the GatB/GatE family. GatB subfamily. Heterotrimer of A, B and C subunits.

The catalysed reaction is L-glutamyl-tRNA(Gln) + L-glutamine + ATP + H2O = L-glutaminyl-tRNA(Gln) + L-glutamate + ADP + phosphate + H(+). It catalyses the reaction L-aspartyl-tRNA(Asn) + L-glutamine + ATP + H2O = L-asparaginyl-tRNA(Asn) + L-glutamate + ADP + phosphate + 2 H(+). Its function is as follows. Allows the formation of correctly charged Asn-tRNA(Asn) or Gln-tRNA(Gln) through the transamidation of misacylated Asp-tRNA(Asn) or Glu-tRNA(Gln) in organisms which lack either or both of asparaginyl-tRNA or glutaminyl-tRNA synthetases. The reaction takes place in the presence of glutamine and ATP through an activated phospho-Asp-tRNA(Asn) or phospho-Glu-tRNA(Gln). The polypeptide is Aspartyl/glutamyl-tRNA(Asn/Gln) amidotransferase subunit B (Dehalococcoides mccartyi (strain CBDB1)).